The sequence spans 405 residues: Secreted aspartic protease 8 (405 aa).

Positions 1-23 are cleaved as a signal peptide; the sequence is MVSIITFTKNVLVTLAFALLAQG. The propeptide at 24–75 is activation peptide; the sequence is LAIPEDIDKRAEKVVSLDFTVTRKPFNATAHGQHHQSQQQQQQQQQQPAQKR. The tract at residues 52–78 is disordered; the sequence is TAHGQHHQSQQQQQQQQQQPAQKRGTV. Positions 58 to 70 are enriched in low complexity; it reads HQSQQQQQQQQQQ. Positions 89 to 392 constitute a Peptidase A1 domain; the sequence is YAATITVGSN…DLDGNTISLA (304 aa). D107 is a catalytic residue. 107–109 serves as a coordination point for pepstatin A; the sequence is DTG. C122 and C134 are oxidised to a cystine. Pepstatin A-binding positions include 160 to 161 and 292 to 296; these read ED and DSGTT. The active site involves D292. C327 and C358 are disulfide-bonded.

The protein belongs to the peptidase A1 family. As to quaternary structure, monomer.

The protein localises to the secreted. It catalyses the reaction Preferential cleavage at the carboxyl of hydrophobic amino acids, but fails to cleave 15-Leu-|-Tyr-16, 16-Tyr-|-Leu-17 and 24-Phe-|-Phe-25 of insulin B chain. Activates trypsinogen, and degrades keratin.. In terms of biological role, secreted aspartic peptidases (SAPs) are a group of ten acidic hydrolases considered as key virulence factors. These enzymes supply the fungus with nutrient amino acids as well as are able to degrade the selected host's proteins involved in the immune defense. Moreover, acts toward human hemoglobin though limited proteolysis to generate a variety of antimicrobial hemocidins, enabling to compete with the other microorganisms of the same physiological niche using the microbicidal peptides generated from the host protein. Plays a key role in defense against host by cleaving histatin-5 (Hst 5), a peptide from human saliva that carries out fungicidal activity. The cleavage rate decreases in an order of SAP2 &gt; SAP9 &gt; SAP3 &gt; SAP7 &gt; SAP4 &gt; SAP1 &gt; SAP8. The hydrolysis of Hst 5 by SAP8 causes production of the DSHAKRHHGY, HHSHRGY and FHEKHHSHRGY peptides. This is Secreted aspartic protease 8 from Candida albicans (strain SC5314 / ATCC MYA-2876) (Yeast).